A 1104-amino-acid chain; its full sequence is Nitrite reductase [NAD(P)H] (1104 aa).

FAD is bound at residue 44-79 (QKIVVVGLGMVAVAFIEKLVKLDSERRKYDIVVIGE). 146–176 (YDILVLATGSDAVLPTSTPGHDAKGIFVYRT) provides a ligand contact to NAD(+). The tract at residues 396-419 (KFLPGQRPSAESIGAADPNREEEP) is disordered. [2Fe-2S] cluster-binding residues include Cys-500, Cys-502, Cys-535, and Cys-538. Positions 720, 726, 760, and 764 each coordinate [4Fe-4S] cluster. Cys-764 lines the siroheme pocket. Positions 932 to 1040 (WQPVIKADYF…VEEREDGWIY (109 aa)) constitute a Rieske domain. Residues Cys-976, His-978, Cys-1001, and His-1004 each coordinate [2Fe-2S] cluster. Residues 1081–1104 (GKRAGAKGIEGSKPTRSPSNTIDW) are disordered. Positions 1094–1104 (PTRSPSNTIDW) are enriched in polar residues.

This sequence belongs to the nitrite and sulfite reductase 4Fe-4S domain family. Homodimer. Requires siroheme as cofactor. The cofactor is [4Fe-4S] cluster. FAD is required as a cofactor. It depends on [2Fe-2S] cluster as a cofactor.

The catalysed reaction is NH4(+) + 3 NADP(+) + 2 H2O = nitrite + 3 NADPH + 5 H(+). It catalyses the reaction NH4(+) + 3 NAD(+) + 2 H2O = nitrite + 3 NADH + 5 H(+). It functions in the pathway nitrogen metabolism; nitrate reduction (assimilation). The polypeptide is Nitrite reductase [NAD(P)H] (niiA) (Emericella nidulans (strain FGSC A4 / ATCC 38163 / CBS 112.46 / NRRL 194 / M139) (Aspergillus nidulans)).